Here is a 124-residue protein sequence, read N- to C-terminus: Small ribosomal subunit protein uS12 (124 aa).

Asp89 carries the post-translational modification 3-methylthioaspartic acid.

It belongs to the universal ribosomal protein uS12 family. In terms of assembly, part of the 30S ribosomal subunit. Contacts proteins S8 and S17. May interact with IF1 in the 30S initiation complex.

With S4 and S5 plays an important role in translational accuracy. Functionally, interacts with and stabilizes bases of the 16S rRNA that are involved in tRNA selection in the A site and with the mRNA backbone. Located at the interface of the 30S and 50S subunits, it traverses the body of the 30S subunit contacting proteins on the other side and probably holding the rRNA structure together. The combined cluster of proteins S8, S12 and S17 appears to hold together the shoulder and platform of the 30S subunit. The protein is Small ribosomal subunit protein uS12 of Klebsiella pneumoniae (strain 342).